Here is a 165-residue protein sequence, read N- to C-terminus: Small ribosomal subunit protein eS10 (165 aa).

Tyr12 is modified (phosphotyrosine). Positions 92 to 165 are disordered; it reads ATLRRSRPET…FGRGRGQPPQ (74 aa). Basic and acidic residues predominate over residues 97 to 128; the sequence is SRPETGRPRPKGLEGERPARLTRGEADRDTYR. Glycyl lysine isopeptide (Lys-Gly) (interchain with G-Cter in ubiquitin) cross-links involve residues Lys138 and Lys139. Phosphoserine is present on Ser146. The residue at position 153 (Arg153) is an Omega-N-methylarginine. Over residues 154 to 165 the composition is skewed to gly residues; sequence GGFGRGRGQPPQ. Symmetric dimethylarginine is present on residues Arg158 and Arg160.

This sequence belongs to the eukaryotic ribosomal protein eS10 family. In terms of assembly, component of the small ribosomal subunit. The methylated form interacts with NPM1. In terms of processing, methylated by PRMT5. Methylation is necessary for its interaction with NPS1, its localization in the granular component (GC) region of the nucleolus, for the proper assembly of ribosomes, protein synthesis and optimal cell proliferation. Monoubiquitinated by ZNF598 when a ribosome has stalled during translation of poly(A) sequences, leading to preclude synthesis of a long poly-lysine tail and initiate the ribosome quality control (RQC) pathway to degrade the potentially detrimental aberrant nascent polypeptide. Deubiquitinated by OTUD3 and USP21, antagonizing ZNF598 activity. Deubiquitinated by OTUD1, antagonizing ZNF598 activity and stimulating formation of polysomes: deubiquitination by OTUD1 promotes stability and translation of a subset mRNAs with a high abundance of rare codons can limit the translation rate. Deubiquitinated by USP10.

It is found in the cytoplasm. It localises to the nucleus. Its subcellular location is the nucleolus. Its function is as follows. Component of the 40S ribosomal subunit. The ribosome is a large ribonucleoprotein complex responsible for the synthesis of proteins in the cell. The sequence is that of Small ribosomal subunit protein eS10 (RPS10) from Oryctolagus cuniculus (Rabbit).